We begin with the raw amino-acid sequence, 118 residues long: Small ribosomal subunit protein mS37 (118 aa).

Residues 42–84 (EATCITEMSMMMACWKQNEFRDEACRKEIQDFFDCSSRAQEAR) form the CHCH domain. 2 consecutive short sequence motifs (cx9C motif) follow at residues 45–55 (CITEMSMMMAC) and 66–76 (CRKEIQDFFDC). 2 cysteine pairs are disulfide-bonded: cysteine 45/cysteine 76 and cysteine 55/cysteine 66. The tract at residues 86 to 105 (MRSIQESLGQSESLSPHKMT) is disordered. Over residues 89-99 (IQESLGQSESL) the composition is skewed to polar residues.

Belongs to the mitochondrion-specific ribosomal protein mS37 family. In terms of assembly, component of the mitochondrial ribosome small subunit (28S) which comprises a 12S rRNA and about 30 distinct proteins.

Its subcellular location is the mitochondrion. The protein localises to the nucleus. The protein is Small ribosomal subunit protein mS37 (Chchd1) of Mus musculus (Mouse).